The following is a 242-amino-acid chain: Cell division protein FtsQ (242 aa).

Residues 1-12 (MWDNAEAMERLT) lie on the Cytoplasmic side of the membrane. Residues 13–32 (RWLLVMMAMLLAASGLVWFY) traverse the membrane as a helical segment. Topologically, residues 33–242 (NSNHLPVKQV…DGLPEKESEE (210 aa)) are periplasmic. A POTRA domain is found at 37 to 106 (LPVKQVSLKG…DTVEVVLTER (70 aa)).

This sequence belongs to the FtsQ/DivIB family. FtsQ subfamily. As to quaternary structure, part of a complex composed of FtsB, FtsL and FtsQ.

The protein resides in the cell inner membrane. Its function is as follows. Essential cell division protein. May link together the upstream cell division proteins, which are predominantly cytoplasmic, with the downstream cell division proteins, which are predominantly periplasmic. May control correct divisome assembly. The polypeptide is Cell division protein FtsQ (Neisseria gonorrhoeae (strain ATCC 700825 / FA 1090)).